A 413-amino-acid chain; its full sequence is Gamma-glutamyl phosphate reductase (413 aa).

Belongs to the gamma-glutamyl phosphate reductase family.

The protein resides in the cytoplasm. The catalysed reaction is L-glutamate 5-semialdehyde + phosphate + NADP(+) = L-glutamyl 5-phosphate + NADPH + H(+). Its pathway is amino-acid biosynthesis; L-proline biosynthesis; L-glutamate 5-semialdehyde from L-glutamate: step 2/2. Its function is as follows. Catalyzes the NADPH-dependent reduction of L-glutamate 5-phosphate into L-glutamate 5-semialdehyde and phosphate. The product spontaneously undergoes cyclization to form 1-pyrroline-5-carboxylate. In Lactococcus lactis subsp. cremoris (strain MG1363), this protein is Gamma-glutamyl phosphate reductase.